Consider the following 853-residue polypeptide: Dynein axonemal assembly factor 5 (853 aa).

Ala-2 is subject to N-acetylalanine. HEAT repeat units follow at residues 69 to 107, 200 to 238, 240 to 276, 278 to 316, 374 to 412, 597 to 636, 694 to 732, 736 to 774, and 782 to 820; these read GPWA…RAAR, HMQS…FGSG, SVDD…NLRD, YSFL…QWQQ, RVKA…DEEK, GEAL…RPKD, QEAQ…NSGD, PEKF…CIES, and QSSV…LFPD.

This sequence belongs to the DNAAF5 family. Interacts with DNAI2; probably involved in outer arm dynein assembly. Expressed in ciliated cells including ependymal cells lining the lateral ventricles and multiciliated epithelium of oviduct ampulla.

It localises to the cytoplasm. The protein localises to the cytoplasmic granule. In terms of biological role, cytoplasmic protein involved in the delivery of the dynein machinery to the motile cilium. It is required for the assembly of the axonemal dynein inner and outer arms, two structures attached to the peripheral outer doublet A microtubule of the axoneme, that play a crucial role in cilium motility. This chain is Dynein axonemal assembly factor 5, found in Mus musculus (Mouse).